Reading from the N-terminus, the 313-residue chain is Malate dehydrogenase (313 aa).

Residues 11-16 (GAGNIG) and aspartate 35 contribute to the NAD(+) site. Arginine 84 and arginine 90 together coordinate substrate. Residues asparagine 97 and 120–122 (VTN) each bind NAD(+). Substrate contacts are provided by asparagine 122 and arginine 153. Histidine 177 (proton acceptor) is an active-site residue.

This sequence belongs to the LDH/MDH superfamily. MDH type 3 family.

The catalysed reaction is (S)-malate + NAD(+) = oxaloacetate + NADH + H(+). Functionally, catalyzes the reversible oxidation of malate to oxaloacetate. This chain is Malate dehydrogenase, found in Ehrlichia canis (strain Jake).